The primary structure comprises 616 residues: Chaperone protein HscA (616 aa).

It belongs to the heat shock protein 70 family.

Functionally, chaperone involved in the maturation of iron-sulfur cluster-containing proteins. Has a low intrinsic ATPase activity which is markedly stimulated by HscB. Involved in the maturation of IscU. This is Chaperone protein HscA from Photorhabdus laumondii subsp. laumondii (strain DSM 15139 / CIP 105565 / TT01) (Photorhabdus luminescens subsp. laumondii).